The following is a 218-amino-acid chain: Cold-regulated protein 28 (218 aa).

2 disordered regions span residues 1–51 and 166–218; these read MEND…ADSK and TKHS…KPRT. Over residues 20-37 the composition is skewed to low complexity; the sequence is EASAESQSESTLSNSLDS. The span at 186 to 207 shows a compositional bias: basic and acidic residues; sequence GEVSKKREREANNDDSSLKEDQ.

The protein resides in the nucleus. Its function is as follows. Together with COR27, involved in central circadian clock regulation and in flowering promotion, by binding to the chromatin of clock-associated evening genes TOC1, PRR5, ELF4 and cold-responsive genes in order to repress their transcription. Negative regulator of freezing tolerance. In Arabidopsis thaliana (Mouse-ear cress), this protein is Cold-regulated protein 28.